The sequence spans 72 residues: Translation initiation factor IF-1 (72 aa).

The region spanning 1–72 is the S1-like domain; sequence MSKEDVIELE…TRGRIVWRSK (72 aa).

This sequence belongs to the IF-1 family. In terms of assembly, component of the 30S ribosomal translation pre-initiation complex which assembles on the 30S ribosome in the order IF-2 and IF-3, IF-1 and N-formylmethionyl-tRNA(fMet); mRNA recruitment can occur at any time during PIC assembly.

Its subcellular location is the cytoplasm. One of the essential components for the initiation of protein synthesis. Stabilizes the binding of IF-2 and IF-3 on the 30S subunit to which N-formylmethionyl-tRNA(fMet) subsequently binds. Helps modulate mRNA selection, yielding the 30S pre-initiation complex (PIC). Upon addition of the 50S ribosomal subunit IF-1, IF-2 and IF-3 are released leaving the mature 70S translation initiation complex. This is Translation initiation factor IF-1 from Caldicellulosiruptor saccharolyticus (strain ATCC 43494 / DSM 8903 / Tp8T 6331).